Here is a 116-residue protein sequence, read N- to C-terminus: NADH-ubiquinone oxidoreductase chain 3 (116 aa).

Helical transmembrane passes span 3-23, 56-76, and 85-105; these read LLMT…IVSF, FFLI…LLPL, and PLLT…GLIY.

It belongs to the complex I subunit 3 family.

The protein resides in the mitochondrion membrane. The catalysed reaction is a ubiquinone + NADH + 5 H(+)(in) = a ubiquinol + NAD(+) + 4 H(+)(out). In terms of biological role, core subunit of the mitochondrial membrane respiratory chain NADH dehydrogenase (Complex I) that is believed to belong to the minimal assembly required for catalysis. Complex I functions in the transfer of electrons from NADH to the respiratory chain. The immediate electron acceptor for the enzyme is believed to be ubiquinone. The polypeptide is NADH-ubiquinone oxidoreductase chain 3 (MT-ND3) (Paralichthys olivaceus (Bastard halibut)).